The chain runs to 371 residues: Queuine tRNA-ribosyltransferase (371 aa).

Residue aspartate 89 is the Proton acceptor of the active site. Substrate is bound by residues 89–93, aspartate 143, glutamine 185, and glycine 212; that span reads DSGGF. The tract at residues 243-249 is RNA binding; sequence GVGKPED. Aspartate 262 (nucleophile) is an active-site residue. The tract at residues 267-271 is RNA binding; important for wobble base 34 recognition; it reads TRNAR. Residues cysteine 300, cysteine 302, cysteine 305, and histidine 331 each coordinate Zn(2+).

This sequence belongs to the queuine tRNA-ribosyltransferase family. As to quaternary structure, homodimer. Within each dimer, one monomer is responsible for RNA recognition and catalysis, while the other monomer binds to the replacement base PreQ1. It depends on Zn(2+) as a cofactor.

The enzyme catalyses 7-aminomethyl-7-carbaguanine + guanosine(34) in tRNA = 7-aminomethyl-7-carbaguanosine(34) in tRNA + guanine. It participates in tRNA modification; tRNA-queuosine biosynthesis. In terms of biological role, catalyzes the base-exchange of a guanine (G) residue with the queuine precursor 7-aminomethyl-7-deazaguanine (PreQ1) at position 34 (anticodon wobble position) in tRNAs with GU(N) anticodons (tRNA-Asp, -Asn, -His and -Tyr). Catalysis occurs through a double-displacement mechanism. The nucleophile active site attacks the C1' of nucleotide 34 to detach the guanine base from the RNA, forming a covalent enzyme-RNA intermediate. The proton acceptor active site deprotonates the incoming PreQ1, allowing a nucleophilic attack on the C1' of the ribose to form the product. After dissociation, two additional enzymatic reactions on the tRNA convert PreQ1 to queuine (Q), resulting in the hypermodified nucleoside queuosine (7-(((4,5-cis-dihydroxy-2-cyclopenten-1-yl)amino)methyl)-7-deazaguanosine). This Pseudomonas syringae pv. tomato (strain ATCC BAA-871 / DC3000) protein is Queuine tRNA-ribosyltransferase.